A 505-amino-acid chain; its full sequence is Probable glycine dehydrogenase (decarboxylating) subunit 2 (505 aa).

Lys-274 carries the N6-(pyridoxal phosphate)lysine modification.

It belongs to the GcvP family. C-terminal subunit subfamily. The glycine cleavage system is composed of four proteins: P, T, L and H. In this organism, the P 'protein' is a heterodimer of two subunits. It depends on pyridoxal 5'-phosphate as a cofactor.

The enzyme catalyses N(6)-[(R)-lipoyl]-L-lysyl-[glycine-cleavage complex H protein] + glycine + H(+) = N(6)-[(R)-S(8)-aminomethyldihydrolipoyl]-L-lysyl-[glycine-cleavage complex H protein] + CO2. The glycine cleavage system catalyzes the degradation of glycine. The P protein binds the alpha-amino group of glycine through its pyridoxal phosphate cofactor; CO(2) is released and the remaining methylamine moiety is then transferred to the lipoamide cofactor of the H protein. The chain is Probable glycine dehydrogenase (decarboxylating) subunit 2 from Sulfurisphaera tokodaii (strain DSM 16993 / JCM 10545 / NBRC 100140 / 7) (Sulfolobus tokodaii).